The primary structure comprises 241 residues: Triosephosphate isomerase (241 aa).

9 to 11 (NWK) lines the substrate pocket. Catalysis depends on His-96, which acts as the Electrophile. Glu-165 (proton acceptor) is an active-site residue. Substrate-binding positions include Gly-171, Ser-204, and 225–226 (GG).

It belongs to the triosephosphate isomerase family. Homodimer.

It localises to the cytoplasm. It catalyses the reaction D-glyceraldehyde 3-phosphate = dihydroxyacetone phosphate. It participates in carbohydrate biosynthesis; gluconeogenesis. The protein operates within carbohydrate degradation; glycolysis; D-glyceraldehyde 3-phosphate from glycerone phosphate: step 1/1. Functionally, involved in the gluconeogenesis. Catalyzes stereospecifically the conversion of dihydroxyacetone phosphate (DHAP) to D-glyceraldehyde-3-phosphate (G3P). In Prochlorococcus marinus (strain MIT 9301), this protein is Triosephosphate isomerase.